The following is a 945-amino-acid chain: MSTPSIPQFPSPFSPFSSGSQSTGMAPSQTVGLDTLAEGSQYVLEQLQLSRDAAGTGAGDGATSTSLRNSMSHAKDQPLFDDERNQSAGSGFKNTLQRDPLVEARSAIRKNSSSAPVRRRISRACDQCNQLRTKCDGQHPCAHCIEFGLTCEYARERKKRGKASKKDLAAAAAAATHGSNGHSGQANASLMAERTSEDSRPAQDVNGRYDSTFESHHISSQPSHMQHANNAGISGLHDSQTAPSHSQPSLGTTIDAMHLGHFNTLNDSGRPAMSMSDLRSLPPSVLPPQGLSSGYNASAFALVNPQEPGSPANQFRLGSSAENPTAPFLGLSPPGQSPGWLPLPSPSPANFPSFSLHPFSSTLRYPVLQPVLPHIASIIPQSLACDLLDVYFHSSSPSHLSPSSPYVVGYIFRKQSFLHPTKPRLCSSGLLASMLWVAAQTSEAPFLTSPPSARGRVCQKLLELTIGLLRPLVHGPATGEASPNYAANMVINGVALGGFGVSMDQLGAQSSATGAVDDVATYVHLATVVSASEYKAASMRWWTAAWSLARELKLGRELPPNVSHARQDGERDGDGEADRRHPPTLITSLGHGPGSSGINVTEEEREERRRLWWLLYATDRHLALCYNRPLTLLDKECGGLLQPMNDDLWQVGDFAAAAYRQVGPPVECTGHSMYGYFLPLMTILGGIVDLHHAENHPRFGLAFRNSPEWERQVQDVTRQLDTYGRSLKEFEARYTSNLTLGTAENEPAVEGAHLDHTSPSGRSSSTVGSRVSGSIMHTRMVVAYGTHIMHVLHILLAGKWDPVNLLEDHDLWISSESFVSAMSHAVGAAEAAAEILEHDPDLSFMPFFFGIYLLQGSFLLLLAADKLQGDASPSVVRACETIVRAHEACVVTLNTEYQRTFRKVMRSALAQVRGRIPEDFGEQQQRRREVLALYRWSGDGSGLAL.

2 disordered regions span residues 1–33 (MSTPSIPQFPSPFSPFSSGSQSTGMAPSQTVGL) and 53–74 (AAGTGAGDGATSTSLRNSMSHA). The span at 14–24 (SPFSSGSQSTG) shows a compositional bias: low complexity. Positions 125-151 (CDQCNQLRTKCDGQHPCAHCIEFGLTC) form a DNA-binding region, zn(2)-C6 fungal-type. Disordered stretches follow at residues 172–251 (AAAA…PSLG) and 559–601 (PPNV…INVT). Polar residues-rich tracts occupy residues 177–188 (HGSNGHSGQANA) and 218–251 (ISSQPSHMQHANNAGISGLHDSQTAPSHSQPSLG). The span at 565–581 (ARQDGERDGDGEADRRH) shows a compositional bias: basic and acidic residues.

The protein belongs to the xlnR/xlr1 family.

It localises to the nucleus. Its function is as follows. Transcriptional activator of the xylanolytic system. Involved in the regulation of extracellular cellulolytic and xylanolytic genes and in the regulation of the intracellular activities of D-xylose catabolic genes in the pentose catabolic pathway (PCP) in response to the presence of D-xylose. The sequence is that of Xylanolytic transcriptional activator xlnR (xlnR) from Aspergillus kawachii (White koji mold).